The following is a 373-amino-acid chain: Glutamine synthetase (373 aa).

Alanine 2 bears the N-acetylalanine mark. The required for glutamine-induced ubiquitination by CRL4(CRBN) and proteasomal degradation stretch occupies residues 2–25 (ATSASSHLNKGIKQVYMALPQGDK). N6-acetyllysine is present on residues lysine 11 and lysine 14. The region spanning 26-106 (VQAMYIWIDG…VFCEVFKYNR (81 aa)) is the GS beta-grasp domain. Tyrosine 104 bears the Phosphotyrosine mark. Residues 113–373 (LRHTCKRIMD…TGDEPFQYKN (261 aa)) enclose the GS catalytic domain. Glutamate 134 is a binding site for ATP. Mn(2+) is bound by residues glutamate 134, glutamate 136, glutamate 196, and glutamate 203. 203 to 208 (EFQIGP) contacts ATP. 246-247 (NW) serves as a coordination point for L-glutamate. Histidine 253 is a Mn(2+) binding site. Residues 255 to 257 (NFS), arginine 319, and arginine 324 contribute to the ATP site. L-glutamate is bound at residue arginine 319. 336–338 (YFE) lines the ADP pocket. Glutamate 338 is a binding site for Mn(2+). Residue arginine 340 coordinates L-glutamate. Position 343 is a phosphoserine (serine 343).

The protein belongs to the glutamine synthetase family. In terms of assembly, decamer; composed of two pentamers. Interacts with PALMD. Interacts with RHOJ. Interacts with BEST2; this interaction tethers a fraction of GLUL to the membrane, causing a decrease of cytosolic glutamine synthase (GS) activity and inhibits the chloride channel activity of BEST2 by affecting the gating at the aperture in the absence of intracellular glutamate. Mg(2+) serves as cofactor. The cofactor is Mn(2+). In terms of processing, palmitoylated; undergoes autopalmitoylation. Acetylated by EP300/p300; acetylation is stimulated by increased glutamine levels and promotes ubiquitin-mediated proteasomal degradation. Post-translationally, ubiquitinated by ZNRF1. Ubiquitinated by the DCX (DDB1-CUL4-X-box) E3 ubiquitin-protein ligase complex called CRL4(CRBN), leading to proteasomal degradation.

It is found in the cytoplasm. The protein localises to the cytosol. Its subcellular location is the microsome. It localises to the mitochondrion. The protein resides in the cell membrane. The enzyme catalyses L-glutamate + NH4(+) + ATP = L-glutamine + ADP + phosphate + H(+). It catalyses the reaction L-cysteinyl-[protein] + hexadecanoyl-CoA = S-hexadecanoyl-L-cysteinyl-[protein] + CoA. Its activity is regulated as follows. Glutamine synthetase activity is inhibited by methionine sulfoximine (MSO). In terms of biological role, glutamine synthetase that catalyzes the ATP-dependent conversion of glutamate and ammonia to glutamine. Its role depends on tissue localization: in the brain, it regulates the levels of toxic ammonia and converts neurotoxic glutamate to harmless glutamine, whereas in the liver, it is one of the enzymes responsible for the removal of ammonia. Plays a key role in ammonium detoxification during erythropoiesis: the glutamine synthetase activity is required to remove ammonium generated by porphobilinogen deaminase (HMBS) during heme biosynthesis to prevent ammonium accumulation and oxidative stress. Essential for proliferation of fetal skin fibroblasts. Independently of its glutamine synthetase activity, required for endothelial cell migration during vascular development. Involved in angiogenesis by regulating membrane localization and activation of the GTPase RHOJ, possibly by promoting RHOJ palmitoylation. May act as a palmitoyltransferase for RHOJ: able to autopalmitoylate and then transfer the palmitoyl group to RHOJ. Plays a role in ribosomal 40S subunit biogenesis. Through the interaction with BEST2, inhibits BEST2 channel activity by affecting the gating at the aperture in the absence of intracellular L-glutamate, but sensitizes BEST2 to intracellular L-glutamate, which promotes the opening of BEST2 and thus relieves its inhibitory effect on BEST2. This is Glutamine synthetase from Bos taurus (Bovine).